Here is a 75-residue protein sequence, read N- to C-terminus: ATP synthase subunit c (75 aa).

Transmembrane regions (helical) follow at residues 9-29 (IGAG…GNIW) and 52-72 (IGFA…LILL).

Belongs to the ATPase C chain family. As to quaternary structure, F-type ATPases have 2 components, F(1) - the catalytic core - and F(0) - the membrane proton channel. F(1) has five subunits: alpha(3), beta(3), gamma(1), delta(1), epsilon(1). F(0) has four main subunits: a(1), b(1), b'(1) and c(10-14). The alpha and beta chains form an alternating ring which encloses part of the gamma chain. F(1) is attached to F(0) by a central stalk formed by the gamma and epsilon chains, while a peripheral stalk is formed by the delta, b and b' chains.

It is found in the cell inner membrane. In terms of biological role, f(1)F(0) ATP synthase produces ATP from ADP in the presence of a proton or sodium gradient. F-type ATPases consist of two structural domains, F(1) containing the extramembraneous catalytic core and F(0) containing the membrane proton channel, linked together by a central stalk and a peripheral stalk. During catalysis, ATP synthesis in the catalytic domain of F(1) is coupled via a rotary mechanism of the central stalk subunits to proton translocation. Its function is as follows. Key component of the F(0) channel; it plays a direct role in translocation across the membrane. A homomeric c-ring of between 10-14 subunits forms the central stalk rotor element with the F(1) delta and epsilon subunits. This is ATP synthase subunit c from Rhodospirillum rubrum (strain ATCC 11170 / ATH 1.1.1 / DSM 467 / LMG 4362 / NCIMB 8255 / S1).